The sequence spans 187 residues: Probable chorismate pyruvate-lyase (187 aa).

Residues Arg-76, Leu-114, and Glu-173 each contribute to the substrate site.

It belongs to the UbiC family.

It is found in the cytoplasm. It catalyses the reaction chorismate = 4-hydroxybenzoate + pyruvate. It participates in cofactor biosynthesis; ubiquinone biosynthesis. Removes the pyruvyl group from chorismate, with concomitant aromatization of the ring, to provide 4-hydroxybenzoate (4HB) for the ubiquinone pathway. The sequence is that of Probable chorismate pyruvate-lyase from Shewanella amazonensis (strain ATCC BAA-1098 / SB2B).